The following is a 433-amino-acid chain: AP-2 complex subunit mu (433 aa).

The region spanning 168 to 432 (RNELFLDVLE…IGRSGIYETR (265 aa)) is the MHD domain. A 1,2-diacyl-sn-glycero-3-phospho-(1D-myo-inositol-3,4,5-trisphosphate) is bound by residues lysine 339, lysine 343, and lysine 352.

The protein belongs to the adaptor complexes medium subunit family. As to quaternary structure, adaptor protein complex 2 (AP-2) is a heterotetramer composed of two large adaptins (alpha-type subunit and beta-type subunit), a medium adaptin (mu-type subunit) and a small adaptin (sigma-type subunit).

It is found in the cell membrane. It localises to the membrane. The protein resides in the coated pit. Its function is as follows. Component of the adaptor complexes which link clathrin to receptors in coated vesicles. Clathrin-associated protein complexes are believed to interact with the cytoplasmic tails of membrane proteins, leading to their selection and concentration. AP50 is a subunit of the plasma membrane adaptor. The complex binds polyphosphoinositide-containing lipids. This is AP-2 complex subunit mu (AP2M1) from Gallus gallus (Chicken).